The chain runs to 271 residues: Integral membrane protein 2C (271 aa).

T41 bears the Phosphothreonine mark. The chain crosses the membrane as a helical; Signal-anchor for type II membrane protein span at residues V59 to A79. The 95-residue stretch at F140–L234 folds into the BRICHOS domain. A disulfide bridge connects residues C167 and C226. Residue N173 is glycosylated (N-linked (GlcNAc...) asparagine).

Belongs to the ITM2 family. As to quaternary structure, interacts with BACE1. Interacts with APP. Interacts with STMN2. In terms of processing, type I membrane-bound, as well as soluble, furin has a pre-eminent role in ITM2C proteolytic processing. PCSK7 and PCSK5 may also be involved although to a lesser extent. The soluble form of PCSK7 is incapable of processing ITM2C. Fails to undergo shedding by ADAM10 and intramembrane cleavage by SPPL2B.

It localises to the lysosome membrane. The protein localises to the cell membrane. Negative regulator of amyloid-beta peptide production. May inhibit the processing of APP by blocking its access to alpha- and beta-secretase. Binding to the beta-secretase-cleaved APP C-terminal fragment is negligible, suggesting that ITM2C is a poor gamma-secretase cleavage inhibitor. May play a role in TNF-induced cell death and neuronal differentiation. This is Integral membrane protein 2C (ITM2C) from Bos taurus (Bovine).